Here is a 236-residue protein sequence, read N- to C-terminus: 3-deoxy-D-manno-octulosonic acid kinase (236 aa).

D167 is a catalytic residue.

This sequence belongs to the protein kinase superfamily. KdkA/RfaP family.

It localises to the cell inner membrane. It catalyses the reaction an alpha-Kdo-(2-&gt;6)-lipid IVA + ATP = a 4-O-phospho-alpha-Kdo-(2-&gt;6)-lipid IVA + ADP + H(+). The protein operates within bacterial outer membrane biogenesis; LPS core biosynthesis. Functionally, catalyzes the ATP-dependent phosphorylation of the 3-deoxy-D-manno-octulosonic acid (Kdo) residue in Kdo-lipid IV(A) at the 4-OH position. In Vibrio vulnificus (strain CMCP6), this protein is 3-deoxy-D-manno-octulosonic acid kinase.